We begin with the raw amino-acid sequence, 1925 residues long: Methylcytosine dioxygenase tet3-A (1925 aa).

The CXXC-type zinc-finger motif lies at 62 to 103 (SNKKRKRCGVCVPCLRKEPCGACYNCVNRSTSHQICKMRKCE). Zn(2+)-binding residues include Cys69, Cys72, Cys75, Cys81, Cys84, Cys87, Cys97, and Cys102. Disordered regions lie at residues 457-476 (KNAL…QNKK), 630-685 (KSQK…NAVF), 774-812 (GAKD…QNDL), and 833-892 (DFSL…PISH). The segment covering 465–476 (SPRQTSWEQNKK) has biased composition (polar residues). The span at 665 to 677 (KPPRKQVQIKKPR) shows a compositional bias: basic residues. Low complexity predominate over residues 777–797 (DSCPTPSTDDASSSSGQGDSA). Composition is skewed to polar residues over residues 841-856 (APSQ…QISG) and 883-892 (PALSNNPISH). Residues Cys982, Cys984, Cys1042, His1068, and Cys1070 each coordinate Zn(2+). Arg1110 provides a ligand contact to 2-oxoglutarate. Positions 1120, 1122, 1138, 1147, and 1207 each coordinate Zn(2+). Cys1223 contacts 2-oxoglutarate. His1229 serves as a coordination point for Zn(2+). Fe cation-binding residues include His1231 and Asp1233. 2-oxoglutarate is bound at residue His1265. Disordered regions lie at residues 1307–1364 (SEPA…QTKP), 1474–1513 (LADG…KSFN), 1556–1600 (SVHS…LPND), and 1722–1769 (NWAS…EEEI). Residues 1316–1347 (RQLDAKKAAAEKKKLQKEKLVSPDKTKQEPAD) show a composition bias toward basic and acidic residues. Positions 1350–1363 (MCQQNPGVPQQQTK) are enriched in polar residues. Basic and acidic residues predominate over residues 1490–1499 (SYRRSSEVPH). Polar residues-rich tracts occupy residues 1502–1513 (SLQNPNSQKSFN), 1556–1572 (SVHS…QTSD), and 1730–1742 (VGNS…SQNH). His1804 is a binding site for Fe cation. 1819-1821 (RIS) is a 2-oxoglutarate binding site. Positions 1837 to 1870 (LALWEAKMKLLAERARVKEEEAARLGIKQEVKSL) form a coiled coil.

Belongs to the TET family. Requires Fe(2+) as cofactor. Zn(2+) serves as cofactor. As to expression, detected in embryo (at protein level). Detected in embryonic head, in developing brain, neural tube and eye.

It localises to the nucleus. Its subcellular location is the chromosome. The enzyme catalyses a 5-methyl-2'-deoxycytidine in DNA + 2-oxoglutarate + O2 = a 5-hydroxymethyl-2'-deoxycytidine in DNA + succinate + CO2. It carries out the reaction a 5-hydroxymethyl-2'-deoxycytidine in DNA + 2-oxoglutarate + O2 = a 5-formyl-2'-deoxycytidine in DNA + succinate + CO2 + H2O. It catalyses the reaction a 5-formyl-2'-deoxycytidine in DNA + 2-oxoglutarate + O2 = a 5-carboxyl-2'-deoxycytidine in DNA + succinate + CO2 + H(+). Its function is as follows. Dioxygenase that catalyzes the conversion of the modified genomic base 5-methylcytosine (5mC) into 5-hydroxymethylcytosine (5hmC) and plays a key role in epigenetic chromatin reprogramming during embryonic development. Conversion of 5mC into 5hmC probably constitutes the first step in cytosine demethylation. Selectively binds to the promoter region of target genes and contributes to regulate the expression of numerous developmental genes, including pax6, rax, sox9 and six3. May also contribute to the regulation of target genes in ways that do not require its enzyme activity. The protein is Methylcytosine dioxygenase tet3-A of Xenopus laevis (African clawed frog).